Consider the following 211-residue polypeptide: MKAQKYSKEGKLISEIELPSALFESKLSVASIYEAIKAENANLRSGNHATKTRSEVRGGGKKPWSQKGTGHARQGSTRAPHWVGGGTVHGPQKRDYSYKVSSKLKHKAVLSILNKKAQASAVKVIEDLDPKEYSTKSFDSIFKNMNLRNTGVIGFLVQGESDFVKKSVRNIPTVKYINSKRISCRDILYNRNLVITEAALNEMLTQYGATK.

Positions 44 to 94 are disordered; the sequence is RSGNHATKTRSEVRGGGKKPWSQKGTGHARQGSTRAPHWVGGGTVHGPQKR.

It belongs to the universal ribosomal protein uL4 family. As to quaternary structure, part of the 50S ribosomal subunit.

Its function is as follows. One of the primary rRNA binding proteins, this protein initially binds near the 5'-end of the 23S rRNA. It is important during the early stages of 50S assembly. It makes multiple contacts with different domains of the 23S rRNA in the assembled 50S subunit and ribosome. Functionally, forms part of the polypeptide exit tunnel. The sequence is that of Large ribosomal subunit protein uL4 from Leptospira borgpetersenii serovar Hardjo-bovis (strain JB197).